Here is a 122-residue protein sequence, read N- to C-terminus: Large ribosomal subunit protein uL14 (122 aa).

It belongs to the universal ribosomal protein uL14 family. In terms of assembly, part of the 50S ribosomal subunit. Forms a cluster with proteins L3 and L19. In the 70S ribosome, L14 and L19 interact and together make contacts with the 16S rRNA in bridges B5 and B8.

Its function is as follows. Binds to 23S rRNA. Forms part of two intersubunit bridges in the 70S ribosome. This chain is Large ribosomal subunit protein uL14, found in Borrelia turicatae (strain 91E135).